A 64-amino-acid polypeptide reads, in one-letter code: Cytochrome c oxidase subunit 5C-2 (64 aa).

The helical transmembrane segment at 15 to 34 (SVVKELIIGLTLGLAAGGLW) threads the bilayer.

Belongs to the cytochrome c oxidase subunit 5C family.

The protein localises to the mitochondrion inner membrane. In terms of biological role, this protein is one of the nuclear-coded polypeptide chains of cytochrome c oxidase, the terminal oxidase in mitochondrial electron transport. The chain is Cytochrome c oxidase subunit 5C-2 from Arabidopsis thaliana (Mouse-ear cress).